A 513-amino-acid polypeptide reads, in one-letter code: Voltage-gated potassium channel regulatory subunit KCNG1 (513 aa).

At 1–224 the chain is on the cytoplasmic side; that stretch reads MTLLPGDNSD…DMVERPHSGL (224 aa). A disordered region spans residues 184–204; sequence EEDDALDSEGRDSEGPAEGEG. A compositionally biased stretch (basic and acidic residues) spans 191-204; sequence SEGRDSEGPAEGEG. A helical transmembrane segment spans residues 225 to 246; it reads PGKVFACLSVLFVTVTAVNLSV. The Extracellular segment spans residues 247 to 267; sequence STLPSLREEEEQGHCSQMCHN. The helical transmembrane segment at 268–289 threads the bilayer; the sequence is VFIVESVCVGWFSLEFLLRLIQ. The Cytoplasmic portion of the chain corresponds to 290–300; sequence APSKFAFLRSP. Residues 301–321 traverse the membrane as a helical segment; the sequence is LTLIDLVAILPYYITLLVDGA. Residues 322–338 are Extracellular-facing; sequence AAGRRKPGAGNSYLDKV. Residues 339 to 359 traverse the membrane as a helical; Voltage-sensor segment; it reads GLVLRVLRALRILYVMRLARH. At 360–374 the chain is on the cytoplasmic side; that stretch reads SLGLQTLGLTARRCT. The chain crosses the membrane as a helical span at residues 375–396; it reads REFGLLLLFLCVAIALFAPLLY. The Extracellular portion of the chain corresponds to 397–411; the sequence is VIENEMADSPEFTSI. Positions 412 to 423 form an intramembrane region, helical; it reads PACYWWAVITMT. A Selectivity filter motif is present at residues 424-429; the sequence is TVGYGD. Residues 424-431 lie within the membrane without spanning it; sequence TVGYGDMV. Residues 432 to 438 are Extracellular-facing; it reads PRSTPGQ. Residues 439 to 467 traverse the membrane as a helical segment; it reads VVALSSILSGILLMAFPVTSIFHTFSRSY. Residues 468–513 are Cytoplasmic-facing; it reads LELKQEQERVMFRRAQFLIKTKSQLSVSQDSDILFGSASSDTRDNN.

It belongs to the potassium channel family. G (TC 1.A.1.2) subfamily. Kv6.1/KCNG1 sub-subfamily. As to quaternary structure, heterotetramer with KCNB1. Heterotetramer with KCNB2. As to expression, expressed in brain and placenta, and at much lower levels in kidney and pancreas.

It localises to the cell membrane. Its function is as follows. Regulatory alpha-subunit of the voltage-gated potassium (Kv) channel which, when coassembled with KCNB1 or KCNB2, can modulate their expression and their gating kinetics by acting on deactivation upon repolarization and inactivation during maintained depolarization. Potassium channel subunit that does not form functional channels by itself. In Homo sapiens (Human), this protein is Voltage-gated potassium channel regulatory subunit KCNG1.